Reading from the N-terminus, the 121-residue chain is Ribosome-binding factor A (121 aa).

The protein belongs to the RbfA family. In terms of assembly, monomer. Binds 30S ribosomal subunits, but not 50S ribosomal subunits or 70S ribosomes.

Its subcellular location is the cytoplasm. In terms of biological role, one of several proteins that assist in the late maturation steps of the functional core of the 30S ribosomal subunit. Associates with free 30S ribosomal subunits (but not with 30S subunits that are part of 70S ribosomes or polysomes). Required for efficient processing of 16S rRNA. May interact with the 5'-terminal helix region of 16S rRNA. The polypeptide is Ribosome-binding factor A (Clostridium acetobutylicum (strain ATCC 824 / DSM 792 / JCM 1419 / IAM 19013 / LMG 5710 / NBRC 13948 / NRRL B-527 / VKM B-1787 / 2291 / W)).